Reading from the N-terminus, the 101-residue chain is uncharacterized protein (101 aa).

This is an uncharacterized protein from Gracula (BFDV).